Reading from the N-terminus, the 424-residue chain is Probable serine/threonine-protein kinase PBL6 (424 aa).

Residues 1–26 (MGCFGRTPKSNKRSDTKTTKNNDFTP) form a disordered region. Glycine 2 is lipidated: N-myristoyl glycine. Cysteine 3 carries S-palmitoyl cysteine lipidation. Residue threonine 87 is modified to Phosphothreonine. The region spanning 98–377 (FKSDCFLGEG…VVMALDHLAS (280 aa)) is the Protein kinase domain. Residues 104 to 112 (LGEGGFGKV) and lysine 127 contribute to the ATP site. A Phosphotyrosine modification is found at tyrosine 172. Aspartate 225 functions as the Proton acceptor in the catalytic mechanism. A phosphoserine mark is found at serine 229 and serine 259. Phosphothreonine is present on residues threonine 260 and threonine 265. Tyrosine 273 is subject to Phosphotyrosine.

This sequence belongs to the protein kinase superfamily. Ser/Thr protein kinase family.

The protein resides in the cell membrane. It carries out the reaction L-seryl-[protein] + ATP = O-phospho-L-seryl-[protein] + ADP + H(+). The catalysed reaction is L-threonyl-[protein] + ATP = O-phospho-L-threonyl-[protein] + ADP + H(+). Functionally, may be involved in plant defense signaling. The polypeptide is Probable serine/threonine-protein kinase PBL6 (Arabidopsis thaliana (Mouse-ear cress)).